Here is a 239-residue protein sequence, read N- to C-terminus: tRNA (guanine-N(7)-)-methyltransferase (239 aa).

S-adenosyl-L-methionine-binding residues include Glu69, Glu94, Asp121, and Asp144. Residue Asp144 is part of the active site. Lys148 lines the substrate pocket. The interval 150-155 (RHNKRR) is interaction with RNA. Substrate-binding positions include Asp180 and 217 to 220 (TKFE).

The protein belongs to the class I-like SAM-binding methyltransferase superfamily. TrmB family. As to quaternary structure, monomer.

The catalysed reaction is guanosine(46) in tRNA + S-adenosyl-L-methionine = N(7)-methylguanosine(46) in tRNA + S-adenosyl-L-homocysteine. Its pathway is tRNA modification; N(7)-methylguanine-tRNA biosynthesis. Catalyzes the formation of N(7)-methylguanine at position 46 (m7G46) in tRNA. This is tRNA (guanine-N(7)-)-methyltransferase from Yersinia pseudotuberculosis serotype O:1b (strain IP 31758).